Here is a 313-residue protein sequence, read N- to C-terminus: Formimidoylglutamase (313 aa).

The Mn(2+) site is built by His130, Asp155, His157, Asp159, Asp241, and Asp243.

This sequence belongs to the arginase family. It depends on Mn(2+) as a cofactor.

It carries out the reaction N-formimidoyl-L-glutamate + H2O = formamide + L-glutamate. The protein operates within amino-acid degradation; L-histidine degradation into L-glutamate; L-glutamate from N-formimidoyl-L-glutamate (hydrolase route): step 1/1. Catalyzes the conversion of N-formimidoyl-L-glutamate to L-glutamate and formamide. The polypeptide is Formimidoylglutamase (Salmonella choleraesuis (strain SC-B67)).